The primary structure comprises 110 residues: Large ribosomal subunit protein uL22 (110 aa).

It belongs to the universal ribosomal protein uL22 family. As to quaternary structure, part of the 50S ribosomal subunit.

Functionally, this protein binds specifically to 23S rRNA; its binding is stimulated by other ribosomal proteins, e.g. L4, L17, and L20. It is important during the early stages of 50S assembly. It makes multiple contacts with different domains of the 23S rRNA in the assembled 50S subunit and ribosome. In terms of biological role, the globular domain of the protein is located near the polypeptide exit tunnel on the outside of the subunit, while an extended beta-hairpin is found that lines the wall of the exit tunnel in the center of the 70S ribosome. The chain is Large ribosomal subunit protein uL22 from Enterobacter sp. (strain 638).